We begin with the raw amino-acid sequence, 251 residues long: MIIPALDIINGDAVRLYQGKYQSQSHYGNPYSILSTYVQQGATMIHLVDLDGARNPKNRQLSLIKELTHTAITSHLKIQIGGGIRHATDIKTLLKFGVNRVILGSIAITHPKKVKQWFTYFNPSSLVLALDIYIDSKNNRKVVIHGWQKETNIQLEEVIENYNSVGLKHVLCTDISKDGTLLGSNINLYQSICYKWPKISFQASGGVAKLTEILQLRSSGVNSIIIGRSFLEKKFTLTEAISCWQNASSRV.

D7 acts as the Proton acceptor in catalysis. D131 serves as the catalytic Proton donor.

Belongs to the HisA/HisF family.

It is found in the cytoplasm. The enzyme catalyses 1-(5-phospho-beta-D-ribosyl)-5-[(5-phospho-beta-D-ribosylamino)methylideneamino]imidazole-4-carboxamide = 5-[(5-phospho-1-deoxy-D-ribulos-1-ylimino)methylamino]-1-(5-phospho-beta-D-ribosyl)imidazole-4-carboxamide. It participates in amino-acid biosynthesis; L-histidine biosynthesis; L-histidine from 5-phospho-alpha-D-ribose 1-diphosphate: step 4/9. This Blochmanniella floridana protein is 1-(5-phosphoribosyl)-5-[(5-phosphoribosylamino)methylideneamino] imidazole-4-carboxamide isomerase.